A 184-amino-acid chain; its full sequence is Photosystem I assembly protein Ycf4 (184 aa).

The next 2 membrane-spanning stretches (helical) occupy residues 22–42 and 57–77; these read FCWAFILFFGSLGFLLVGTSS and IVFFPQGIVMSFYGIAGLFIS.

This sequence belongs to the Ycf4 family.

The protein resides in the plastid. It localises to the chloroplast thylakoid membrane. In terms of biological role, seems to be required for the assembly of the photosystem I complex. This chain is Photosystem I assembly protein Ycf4, found in Gossypium barbadense (Sea Island cotton).